The chain runs to 479 residues: M-phase inducer phosphatase (479 aa).

The disordered stretch occupies residues 182 to 218; it reads MTESNTNSTTTPPPKTPETARDCFKRPEPPASANCSP. The span at 199–209 shows a compositional bias: basic and acidic residues; sequence ETARDCFKRPE. A Rhodanese domain is found at 316–432; it reads KVASYRIIDC…FFESHVELCE (117 aa). The active site involves Cys379. Residue Ser455 is modified to Phosphoserine.

This sequence belongs to the MPI phosphatase family.

The enzyme catalyses O-phospho-L-tyrosyl-[protein] + H2O = L-tyrosyl-[protein] + phosphate. In terms of biological role, this protein functions as a dosage-dependent inducer in mitotic control. It is a tyrosine protein phosphatase required for progression of the cell cycle. It may directly dephosphorylate Cdk1 and activate the Cdk1 activity. In Drosophila melanogaster (Fruit fly), this protein is M-phase inducer phosphatase (stg).